A 142-amino-acid polypeptide reads, in one-letter code: MRHLNQTCKLNRTTSHRRCMFANMLKSLISNERIETTVPKAKALRRYADRMITLAKKNTLSARRQAIAELMIRFNPLTPKEQRAAKEGNTQAYNDDRLVIGKLFDVLGTRFATRQGGYTRIVKQGHRVGDNAQTCIIEYLTD.

The protein belongs to the bacterial ribosomal protein bL17 family. Part of the 50S ribosomal subunit. Contacts protein L32.

This chain is Large ribosomal subunit protein bL17, found in Protochlamydia amoebophila (strain UWE25).